Consider the following 174-residue polypeptide: MDKHGVKTPLWKKETEELRAEDAEQEEGKEGSEDEDEDNQRPLEDSATEGEEPPRVAEEGEGRERRSVSYCPLRQESSTQQVALLRRADSGFWGWLGPLALLGGLTAPTDRKRSLPEEPCVLEIRRRPPRRGGCACCELLFCKKCRSLHSHPAYVAHCVLDHPDLGKAGAAGNS.

Basic and acidic residues-rich tracts occupy residues 1-31 and 52-67; these read MDKHGVKTPLWKKETEELRAEDAEQEEGKEG and EPPRVAEEGEGRERRS. The tract at residues 1–69 is disordered; that stretch reads MDKHGVKTPL…GEGRERRSVS (69 aa).

This is an uncharacterized protein from Homo sapiens (Human).